The chain runs to 245 residues: Phycocyanobilin:ferredoxin oxidoreductase (245 aa).

The protein belongs to the HY2 family.

It catalyses the reaction (2R,3Z)-phycocyanobilin + 4 oxidized [2Fe-2S]-[ferredoxin] = biliverdin IXalpha + 4 reduced [2Fe-2S]-[ferredoxin] + 4 H(+). Catalyzes the four-electron reduction of biliverdin IX-alpha (2-electron reduction at both the A and D rings); the reaction proceeds via an isolatable 2-electron intermediate, 181,182-dihydrobiliverdin. This is Phycocyanobilin:ferredoxin oxidoreductase (pcyA) from Nostoc punctiforme (strain ATCC 29133 / PCC 73102).